The sequence spans 424 residues: Double homeobox protein 4-like protein 2 (424 aa).

Polar residues predominate over residues 1 to 10 (MALPTPSDST). 5 disordered regions span residues 1–24 (MALP…RRRL), 72–102 (SRQL…TAVT), 148–167 (RHPG…CSAA), 218–362 (LQPS…LQEP), and 388–414 (QPLL…PLSE). 2 consecutive DNA-binding regions (homeobox) follow at residues 19-78 (GRRR…LRQH) and 94-153 (GRRK…PGQG). Over residues 265–274 (KSREDRDPQR) the composition is skewed to basic and acidic residues. Low complexity-rich tracts occupy residues 278–302 (PGPC…LAPP) and 319–329 (AGAAWEPQAGA).

Its subcellular location is the nucleus. Its function is as follows. May be involved in transcriptional regulation. The chain is Double homeobox protein 4-like protein 2 (DUX4L2) from Homo sapiens (Human).